The following is a 322-amino-acid chain: MTVFEGNTVAAAIAAGLKQLHRTRDQVEVEVIAEAKKGFLGLGKHPAQVRLTVVPASAAPATTPTSATATAQQSVATESTTAPTMPRPTVQTPKSTPTRQAKTSQATTSAAKPATSKAKAVAKPASMAVTTGPVIADTDQSKPATTSKTKSVAADQSQTPRTPAEIAARQAANETAVRALCDYLLAVVKELGVTADLDVDFGNRYATLNFDTTKQGLLIGKHGRTINALQDLAQVYMNHHGASHVNVVLDVDDYRERRAATLKRLAESTAREVIATGKQVFLDPMPSFERKLIHAELANNHHVTTFSEGRDPHRAVVVAIRK.

Residues 3–52 (VFEGNTVAAAIAAGLKQLHRTRDQVEVEVIAEAKKGFLGLGKHPAQVRLT) form a jag_N domain region. Over residues 58–82 (AAPATTPTSATATAQQSVATESTTA) the composition is skewed to low complexity. The interval 58–162 (AAPATTPTSA…AADQSQTPRT (105 aa)) is disordered. At threonine 89 the chain carries Phosphothreonine. The span at 89-99 (TVQTPKSTPTR) shows a compositional bias: polar residues. Low complexity predominate over residues 100–129 (QAKTSQATTSAAKPATSKAKAVAKPASMAV). Residues 141–161 (SKPATTSKTKSVAADQSQTPR) show a composition bias toward polar residues. One can recognise a KH domain in the interval 174 to 251 (ETAVRALCDY…ASHVNVVLDV (78 aa)). The 67-residue stretch at 256–322 (ERRAATLKRL…HRAVVVAIRK (67 aa)) folds into the R3H domain.

As to quaternary structure, forms a complex with KhpA.

It localises to the cytoplasm. In terms of biological role, a probable RNA chaperone. Forms a complex with KhpA which binds to cellular RNA and controls its expression. Plays a role in peptidoglycan (PG) homeostasis and cell length regulation. Functionally, necessary for correct cell elongation. In Lactiplantibacillus plantarum (strain ATCC BAA-793 / NCIMB 8826 / WCFS1) (Lactobacillus plantarum), this protein is RNA-binding protein KhpB.